Reading from the N-terminus, the 178-residue chain is 2-C-methyl-D-erythritol 2,4-cyclodiphosphate synthase (178 aa).

Asp24, His26, and His61 together coordinate a divalent metal cation. 24 to 26 (DSH) is a 4-CDP-2-C-methyl-D-erythritol 2-phosphate binding site. Residue 150 to 153 (TSGE) participates in 4-CDP-2-C-methyl-D-erythritol 2-phosphate binding.

It belongs to the IspF family. In terms of assembly, homotrimer. A divalent metal cation serves as cofactor.

The enzyme catalyses 4-CDP-2-C-methyl-D-erythritol 2-phosphate = 2-C-methyl-D-erythritol 2,4-cyclic diphosphate + CMP. It functions in the pathway isoprenoid biosynthesis; isopentenyl diphosphate biosynthesis via DXP pathway; isopentenyl diphosphate from 1-deoxy-D-xylulose 5-phosphate: step 4/6. Involved in the biosynthesis of isopentenyl diphosphate (IPP) and dimethylallyl diphosphate (DMAPP), two major building blocks of isoprenoid compounds. Catalyzes the conversion of 4-diphosphocytidyl-2-C-methyl-D-erythritol 2-phosphate (CDP-ME2P) to 2-C-methyl-D-erythritol 2,4-cyclodiphosphate (ME-CPP) with a corresponding release of cytidine 5-monophosphate (CMP). This chain is 2-C-methyl-D-erythritol 2,4-cyclodiphosphate synthase, found in Chlamydia trachomatis serovar L2b (strain UCH-1/proctitis).